The following is a 393-amino-acid chain: MNVKGFRFSAVEAAIKKPGRLDLALICSDAPAAVAAVYTTNKVKAAPVLLDMERTTSGTCRAVVVNSGNANACTGDRGMEDARETTSLVAERIGASEHEVLVCSTGVIGVPLPMERIRGGIPSLVAGLGSATLDQIAAAIMTTDTFPKLEARTGTAGGVGYTIAGIAKGAGMIMPNMATMLAFVVTDAAVDPQWLDRVFRRANDTSFNAITVDGDMSTNDTAIIMANGAAGNPVLSEGSEGAAEFAVLLEEVLLSLAKLIVKDGEGATKFVEVTVKGARSDADAKRAAMAVANSCLVKTAFFGQDANWGRIFAAVGYSGADVEPDRAELFFDDVRMVQGGVFAGGDAEARGTGVLRKKEFTVTVDLHLGDGRATVYTSDLSYDYVKINADYRT.

The substrate site is built by Thr-142, Lys-168, Thr-179, Glu-265, Asn-388, and Thr-393. Thr-179 serves as the catalytic Nucleophile.

The protein belongs to the ArgJ family. In terms of assembly, heterotetramer of two alpha and two beta chains.

It localises to the cytoplasm. The catalysed reaction is N(2)-acetyl-L-ornithine + L-glutamate = N-acetyl-L-glutamate + L-ornithine. It carries out the reaction L-glutamate + acetyl-CoA = N-acetyl-L-glutamate + CoA + H(+). Its pathway is amino-acid biosynthesis; L-arginine biosynthesis; L-ornithine and N-acetyl-L-glutamate from L-glutamate and N(2)-acetyl-L-ornithine (cyclic): step 1/1. It functions in the pathway amino-acid biosynthesis; L-arginine biosynthesis; N(2)-acetyl-L-ornithine from L-glutamate: step 1/4. Its function is as follows. Catalyzes two activities which are involved in the cyclic version of arginine biosynthesis: the synthesis of N-acetylglutamate from glutamate and acetyl-CoA as the acetyl donor, and of ornithine by transacetylation between N(2)-acetylornithine and glutamate. In Geobacter sulfurreducens (strain ATCC 51573 / DSM 12127 / PCA), this protein is Arginine biosynthesis bifunctional protein ArgJ.